The sequence spans 471 residues: Coronin-6 (471 aa).

WD repeat units lie at residues 79–119, 129–169, 173–212, 216–259, and 264–304; these read GHTG…PVRN, GHSK…VLLS, IHPDVIHSVCWNSNGSLLATTCKDKTLRIIDPRKSQVVAE, PHEG…EPVA, and DTSN…PFVH. The segment at 410-433 is disordered; that stretch reads ILDVRPPASPRRSQSASEAPLSQH. The segment covering 419–429 has biased composition (low complexity); that stretch reads PRRSQSASEAP. Residues 426–468 adopt a coiled-coil conformation; it reads SEAPLSQHTLETLLEEIKALRDRVQAQEERITALENMLCELVD.

This Mus musculus (Mouse) protein is Coronin-6 (Coro6).